The following is a 968-amino-acid chain: Pumilio homolog 1 (968 aa).

Disordered stretches follow at residues 1–25 (MIPE…DYEK) and 138–171 (NNVL…TGAS). S194 carries the phosphoserine modification. 3 disordered regions span residues 204–240 (GHGH…SQGI), 260–303 (GTPD…VTSG), and 360–382 (KSDQ…PHGS). 2 stretches are compositionally biased toward polar residues: residues 211 to 220 (QQPSRPASRN) and 227 to 238 (DSNNNLSPSASQ). The residue at position 261 (T261) is a Phosphothreonine. A compositionally biased stretch (polar residues) spans 291-303 (TSNQSPFNGVTSG). The region spanning 610–950 (FGSSMLEEFK…HVVARIEKLV (341 aa)) is the PUM-HD domain. 8 Pumilio repeats span residues 630–665 (EIAG…MVYE), 666–701 (EIMP…ELAE), 702–737 (KLFD…KMVK), 738–773 (ELDG…FIIS), 774–810 (TFFG…KVME), 811–846 (EILS…VIIK), 847–882 (ELAG…LLVN), and 883–924 (EMLG…LILT).

The protein resides in the cytoplasm. Its function is as follows. Sequence-specific RNA-binding protein that regulates translation and mRNA stability by binding the 3'-UTR of target mRNAs. Binds the APUM-binding elements (APBEs) in the 3'-UTR mRNA sequence of CLV1, PNH, WUS and FAS2. This Arabidopsis thaliana (Mouse-ear cress) protein is Pumilio homolog 1 (APUM1).